The sequence spans 921 residues: Phototropin-1B (921 aa).

Residues 1–11 (MASKGTEGGHG) are compositionally biased toward gly residues. Disordered stretches follow at residues 1 to 59 (MASK…SPFL) and 88 to 118 (TGLPQGVSARPSSGSARTSSEDNPQQQQSAA). Positions 40-51 (SSASSFRTAAAA) are enriched in low complexity. The span at 97–117 (RPSSGSARTSSEDNPQQQQSA) shows a compositional bias: polar residues. The PAS 1 domain occupies 123–197 (VSEELRAALS…KIRQSLANGS (75 aa)). FMN is bound by residues 172-177 (NCRFLQ), Arg-190, Asn-205, Asn-215, and Gln-236. Position 173 is an S-4a-FMN cysteine (Cys-173). The PAC 1 domain occupies 197 to 251 (SNYCGRILNYKKDGTPFWNLLTIAPIKDEDGRLLKFIGMQVEVSKYTEGKKDTVV). The span at 286-295 (RSLSESSNNT) shows a compositional bias: polar residues. Disordered stretches follow at residues 286 to 345 (RSLS…QVNR) and 366 to 391 (EKNMLKPRDEDPLIDSDDERPESFED). Composition is skewed to basic and acidic residues over residues 312–321 (PSKRSSESGS) and 366–376 (EKNMLKPRDED). A PAS 2 domain is found at 400-473 (RGIDLATTLE…RKIRDAIDNQ (74 aa)). Residues 449-454 (NCRFLQ), Arg-467, Asn-482, Asn-492, and Gln-513 contribute to the FMN site. Cys-450 bears the S-4a-FMN cysteine mark. Positions 474 to 528 (AEVTVQLINYTKSGKKFWNLFHLQPMRDQKGDVQYFIGVQLDGTEHVQDDAAKEG) constitute a PAC 2 domain. One can recognise a Protein kinase domain in the interval 594–881 (FRPVKPLGSG…ANEIKGHPFF (288 aa)). ATP is bound by residues 600 to 608 (LGSGDTGSV) and Lys-623. The Proton acceptor role is filled by Asp-719.

This sequence belongs to the protein kinase superfamily. Ser/Thr protein kinase family. Homodimer. It depends on FMN as a cofactor. Post-translationally, autophosphorylated in response to blue light irradiation. 2 molecules of FMN bind covalently to cysteines after exposure to blue light and are reversed in the dark.

The enzyme catalyses L-seryl-[protein] + ATP = O-phospho-L-seryl-[protein] + ADP + H(+). The catalysed reaction is L-threonyl-[protein] + ATP = O-phospho-L-threonyl-[protein] + ADP + H(+). Functionally, protein kinase that acts as a blue light photoreceptor in a signal-transduction pathway for phototropic responses. Regulates a wide range of physiological activities in plants that maximize the efficiency of photosynthesis, such as chloroplast relocations, stomata opening, and leaf expansion. This is Phototropin-1B (PHOT1B) from Oryza sativa subsp. japonica (Rice).